The sequence spans 75 residues: MLIPYDALEVDTLTRLIEDFVTRDGTDNGDDTPLETRVLRVRQALTKGQALIVFDPESEQCQLMLKHDVPKHLFD.

It belongs to the UPF0270 family.

The polypeptide is UPF0270 protein Pfl01_4103 (Pseudomonas fluorescens (strain Pf0-1)).